Consider the following 245-residue polypeptide: RAD51-like protein 1 (245 aa).

In terms of assembly, interacts with brc-2 and rad-51.

It localises to the nucleus. Has a role in the homologous recombination repair (HRR) of genomic DNA during meiosis. Required for rad-51 recruitment onto ssDNA gaps generated at stalled replication fork barriers. The polypeptide is RAD51-like protein 1 (rfs-1) (Caenorhabditis elegans).